We begin with the raw amino-acid sequence, 105 residues long: Late embryogenesis abundant protein Lea5-A (105 aa).

The protein belongs to the LEA type 3 family.

In Gossypium hirsutum (Upland cotton), this protein is Late embryogenesis abundant protein Lea5-A (LEA5-A).